The following is a 327-amino-acid chain: Methionyl-tRNA formyltransferase (327 aa).

117–120 (SLLP) lines the (6S)-5,6,7,8-tetrahydrofolate pocket.

Belongs to the Fmt family.

The enzyme catalyses L-methionyl-tRNA(fMet) + (6R)-10-formyltetrahydrofolate = N-formyl-L-methionyl-tRNA(fMet) + (6S)-5,6,7,8-tetrahydrofolate + H(+). Its function is as follows. Attaches a formyl group to the free amino group of methionyl-tRNA(fMet). The formyl group appears to play a dual role in the initiator identity of N-formylmethionyl-tRNA by promoting its recognition by IF2 and preventing the misappropriation of this tRNA by the elongation apparatus. The sequence is that of Methionyl-tRNA formyltransferase from Delftia acidovorans (strain DSM 14801 / SPH-1).